We begin with the raw amino-acid sequence, 188 residues long: EP300-interacting inhibitor of differentiation 1 (188 aa).

Positions 1–122 (MSEMAELSEL…PEEEQLSGAG (122 aa)) are disordered. Composition is skewed to acidic residues over residues 53-64 (LEEEGPMEEEEA) and 94-117 (FESE…EEEQ). Positions 55–121 (EEGPMEEEEA…YPEEEQLSGA (67 aa)) are interaction with NR0B2. Residues 179-183 (LGCDE) carry the LXCXE motif motif.

Interacts via its LXCXE motif with the entire pocket region of RB1. Interacts with EP300, NR0B2 and TRIM27.

The protein resides in the nucleus. It is found in the cytoplasm. In terms of biological role, interacts with RB1 and EP300 and acts as a repressor of MYOD1 transactivation. Inhibits EP300 and CBP histone acetyltransferase activity. May be involved in coupling cell cycle exit to the transcriptional activation of genes required for cellular differentiation. May act as a candidate coinhibitory factor for NR0B2 that can be directly linked to transcription inhibitory mechanisms. This Pongo abelii (Sumatran orangutan) protein is EP300-interacting inhibitor of differentiation 1.